An 862-amino-acid chain; its full sequence is Protein JOKA2 (862 aa).

The PB1 domain occupies 6-90; the sequence is SIVIKVKYEE…NPLRISARLN (85 aa). A compositionally biased stretch (low complexity) spans 92 to 106; the sequence is GERSGRASARSSGNS. Disordered regions lie at residues 92–117, 194–234, and 295–345; these read GERS…VQPP, KGNT…ASNE, and VRNS…DSSG. Positions 325 to 345 are enriched in polar residues; the sequence is SASSSKVKQCNWDSPNADSSG. A ZZ-type; degenerate zinc finger spans residues 442-492; sequence HKGVRCDGCGVHPITGPRFISKVKENYDLCSICFAEMGNDADYIRMDRPLT. Cys447, Cys450, Cys471, and Cys474 together coordinate Zn(2+). The UBA domain maps to 811-860; it reads SVDDLCGVAEWDPILEELKEMGFCDKEMNKKLLKKNNGSIKRVVMDLIAG. Positions 817–824 match the ATG8 interacting motif (AIM) motif; that stretch reads GVAEWDPI.

As to quaternary structure, interacts (via C-terminal AIM motif) with ATG8CL.

The protein localises to the vacuole. It localises to the cytoplasmic vesicle. It is found in the autophagosome. Its function is as follows. Autophagic substrate that functions as a host autophagy cargo receptor. Requires ATG8 protein expression to be recognized as an autophagic substrate. Activates ATG8CL-mediated selective autophagy, and contributes to defense against the fungal pathogen Phytophtora infestans. This Solanum tuberosum (Potato) protein is Protein JOKA2.